The sequence spans 247 residues: 5'-nucleotidase SurE (247 aa).

Positions 8, 9, 39, and 91 each coordinate a divalent metal cation.

This sequence belongs to the SurE nucleotidase family. A divalent metal cation serves as cofactor.

The protein resides in the cytoplasm. It carries out the reaction a ribonucleoside 5'-phosphate + H2O = a ribonucleoside + phosphate. Functionally, nucleotidase that shows phosphatase activity on nucleoside 5'-monophosphates. In Methylobacillus flagellatus (strain ATCC 51484 / DSM 6875 / VKM B-1610 / KT), this protein is 5'-nucleotidase SurE.